We begin with the raw amino-acid sequence, 236 residues long: Probable transcriptional regulatory protein UU295 (236 aa).

The protein belongs to the TACO1 family.

It is found in the cytoplasm. The chain is Probable transcriptional regulatory protein UU295 from Ureaplasma parvum serovar 3 (strain ATCC 700970).